The sequence spans 321 residues: Glucokinase (321 aa).

Residue Gly-8–Thr-13 coordinates ATP.

It belongs to the bacterial glucokinase family.

It localises to the cytoplasm. The catalysed reaction is D-glucose + ATP = D-glucose 6-phosphate + ADP + H(+). In Pectobacterium atrosepticum (strain SCRI 1043 / ATCC BAA-672) (Erwinia carotovora subsp. atroseptica), this protein is Glucokinase.